The primary structure comprises 207 residues: Holliday junction branch migration complex subunit RuvA (207 aa).

Residues 1-64 (MIGRLRGNLL…EDAQLLYGFN (64 aa)) are domain I. Residues 65-143 (TKNERALFRE…GWGAGDLFTP (79 aa)) are domain II. The interval 144 to 158 (ATDAAPMDDGSEFIT) is flexible linker. The domain III stretch occupies residues 159–207 (SPQSAVDEAVSALIALGYKPQQASKTVSQIAKPDMTSEVLIRESLKSMI).

Belongs to the RuvA family. As to quaternary structure, homotetramer. Forms an RuvA(8)-RuvB(12)-Holliday junction (HJ) complex. HJ DNA is sandwiched between 2 RuvA tetramers; dsDNA enters through RuvA and exits via RuvB. An RuvB hexamer assembles on each DNA strand where it exits the tetramer. Each RuvB hexamer is contacted by two RuvA subunits (via domain III) on 2 adjacent RuvB subunits; this complex drives branch migration. In the full resolvosome a probable DNA-RuvA(4)-RuvB(12)-RuvC(2) complex forms which resolves the HJ.

It localises to the cytoplasm. In terms of biological role, the RuvA-RuvB-RuvC complex processes Holliday junction (HJ) DNA during genetic recombination and DNA repair, while the RuvA-RuvB complex plays an important role in the rescue of blocked DNA replication forks via replication fork reversal (RFR). RuvA specifically binds to HJ cruciform DNA, conferring on it an open structure. The RuvB hexamer acts as an ATP-dependent pump, pulling dsDNA into and through the RuvAB complex. HJ branch migration allows RuvC to scan DNA until it finds its consensus sequence, where it cleaves and resolves the cruciform DNA. The sequence is that of Holliday junction branch migration complex subunit RuvA from Aliivibrio fischeri (strain ATCC 700601 / ES114) (Vibrio fischeri).